The following is a 441-amino-acid chain: Phosphoribosylamine--glycine ligase (441 aa).

Positions 112-319 constitute an ATP-grasp domain; the sequence is RNFMKKYGIE…FTEIMSAVVK (208 aa). Position 139–196 (139–196) interacts with ATP; sequence IEKLGDVAVKPSGLTGGKGVKVMGDQLPDLKAAKDYTSELLEKGPVVIEERFIGEEFT. Positions 277, 289, and 291 each coordinate Mg(2+). Positions 277, 289, and 291 each coordinate Mn(2+).

The protein belongs to the GARS family. Requires Mg(2+) as cofactor. Mn(2+) serves as cofactor.

It carries out the reaction 5-phospho-beta-D-ribosylamine + glycine + ATP = N(1)-(5-phospho-beta-D-ribosyl)glycinamide + ADP + phosphate + H(+). It participates in purine metabolism; IMP biosynthesis via de novo pathway; N(1)-(5-phospho-D-ribosyl)glycinamide from 5-phospho-alpha-D-ribose 1-diphosphate: step 2/2. In Methanosarcina acetivorans (strain ATCC 35395 / DSM 2834 / JCM 12185 / C2A), this protein is Phosphoribosylamine--glycine ligase.